A 144-amino-acid polypeptide reads, in one-letter code: Actin-associated protein FAM107A (144 aa).

The stretch at 66–112 forms a coiled coil; it reads ELQRVLEHRRRNQLIKKKKEELEAKRLQCPFEQELLRRQQRLNQLEK. The Nuclear localization signal signature appears at 74–84; that stretch reads RRRNQLIKKKK. Residues 105–124 are disordered; sequence QRLNQLEKPPEKEEDHAPEF. Positions 112–124 are enriched in basic and acidic residues; the sequence is KPPEKEEDHAPEF.

The protein belongs to the FAM107 family. In terms of assembly, interacts with ACTB. Interacts with COMMD1; this interaction stabilizes COMMD1 in the nucleus. Interacts with MAP1A. Interacts with PRDX1. Interacts with F-actin. Widely expressed. Expressed in neurons. Expressed in malignant glial tumors. Expression is reduced or absent in a number of cancer cell lines.

The protein resides in the nucleus. The protein localises to the cytoplasm. It is found in the cytoskeleton. It localises to the stress fiber. Its subcellular location is the cell junction. The protein resides in the focal adhesion. The protein localises to the cell projection. It is found in the ruffle membrane. It localises to the synapse. Its function is as follows. Stress-inducible actin-binding protein that plays a role in synaptic and cognitive functions by modulating actin filamentous (F-actin) dynamics. Mediates polymerization of globular actin to F-actin. Also binds to, stabilizes and bundles F-actin. Involved in synaptic function by regulating neurite outgrowth in an actin-dependent manner and for the acquisition of hippocampus-dependent cognitive function, such as learning and long-term memory. Plays a role in the actin and microtubule cytoskeleton organization; negatively regulates focal adhesion (FA) assembly promoting malignant glial cell migration in an actin-, microtubule- and MAP1A-dependent manner. Also involved in neuroblastoma G1/S phase cell cycle progression and cell proliferation inhibition by stimulating ubiquitination of NF-kappa-B subunit RELA and NF-kappa-B degradation in a COMMD1- and actin-dependent manner. May play a role in tumor development. The sequence is that of Actin-associated protein FAM107A from Homo sapiens (Human).